The primary structure comprises 551 residues: ATPase expression protein 2, mitochondrial (551 aa).

Residues 530–551 form a disordered region; it reads AQKAQKRFDDEEEDSMLLGRLW.

Belongs to the AEP2 family. In terms of assembly, binds to the 5'UTR of the OLI1 mRNA.

It localises to the mitochondrion. In terms of biological role, required for translation of the mitochondrial OLI1 transcript coding for the mitochondrial ATP synthase subunit 9. The chain is ATPase expression protein 2, mitochondrial (AEP2) from Lachancea thermotolerans (strain ATCC 56472 / CBS 6340 / NRRL Y-8284) (Yeast).